Consider the following 482-residue polypeptide: Beta-1,3-glucan-binding protein 2 (482 aa).

Residues 1 to 18 form the signal peptide; it reads MWIKSVCLFATIAGCLGQ. Residues 23-122 enclose the CBM39 domain; it reads YKVPDAKLEA…GEWTVTEFVN (100 aa). The N-linked (GlcNAc...) asparagine glycan is linked to N124. Positions 127-153 are disordered; sequence VVDTSTAPPPVAPAVSEEDQSPGPQWR. One can recognise a GH16 domain in the interval 128–482; it reads VDTSTAPPPV…KVDYVRVYAL (355 aa). N189 carries an N-linked (GlcNAc...) asparagine glycan.

In terms of assembly, monomer. Post-translationally, N-glycosylated. As to expression, cuticle and fat body.

The protein localises to the secreted. Its function is as follows. Involved in the recognition of invading microorganisms. Binds specifically to beta-1,3-glucan and lipoteichoic acid and causes aggregation of invading microorganisms. Binding to beta-1,3-glucan activates the phenoloxidase cascade. This is Beta-1,3-glucan-binding protein 2 from Manduca sexta (Tobacco hawkmoth).